The sequence spans 675 residues: Rho GTPase-activating protein 40 (675 aa).

Disordered stretches follow at residues Arg95 to Ser118 and Lys187 to Leu218. Acidic residues predominate over residues Ser103–Ala116. The Rho-GAP domain occupies Val323–Trp522.

In terms of biological role, GTPase activator for the Rho-type GTPases by converting them to an inactive GDP-bound state. The polypeptide is Rho GTPase-activating protein 40 (Homo sapiens (Human)).